The chain runs to 660 residues: Probable alpha-galactosidase D (660 aa).

The first 20 residues, 1–20, serve as a signal peptide directing secretion; that stretch reads MLLHFILYAALSSVVTSVSL. Asparagine 47, asparagine 91, and asparagine 129 each carry an N-linked (GlcNAc...) asparagine glycan. A disulfide bond links cysteine 124 and cysteine 157. The active-site Nucleophile is aspartate 155. Residues asparagine 182 and asparagine 191 are each glycosylated (N-linked (GlcNAc...) asparagine). 200 to 204 contributes to the substrate binding site; sequence EWGIS. Residue aspartate 222 is the Proton donor of the active site. 7 N-linked (GlcNAc...) asparagine glycosylation sites follow: asparagine 351, asparagine 403, asparagine 460, asparagine 492, asparagine 506, asparagine 514, and asparagine 584.

This sequence belongs to the glycosyl hydrolase 27 family.

It is found in the secreted. The catalysed reaction is Hydrolysis of terminal, non-reducing alpha-D-galactose residues in alpha-D-galactosides, including galactose oligosaccharides, galactomannans and galactolipids.. Functionally, hydrolyzes a variety of simple alpha-D-galactoside as well as more complex molecules such as oligosaccharides and polysaccharides. This Aspergillus niger (strain ATCC MYA-4892 / CBS 513.88 / FGSC A1513) protein is Probable alpha-galactosidase D (aglD).